The chain runs to 312 residues: ADP-L-glycero-D-manno-heptose-6-epimerase (312 aa).

Residues 10 to 11 (FI), 31 to 32 (DN), Lys38, Lys53, 75 to 79 (EGACS), and Asn92 each bind NADP(+). Tyr140 acts as the Proton acceptor in catalysis. Position 144 (Lys144) interacts with NADP(+). A substrate-binding site is contributed by Asn169. Residues Val170 and Lys178 each contribute to the NADP(+) site. Residue Lys178 is the Proton acceptor of the active site. Substrate contacts are provided by residues Ser180, His187, 201–204 (FAGS), Arg209, and Tyr274.

This sequence belongs to the NAD(P)-dependent epimerase/dehydratase family. HldD subfamily. In terms of assembly, homopentamer. NADP(+) is required as a cofactor.

The enzyme catalyses ADP-D-glycero-beta-D-manno-heptose = ADP-L-glycero-beta-D-manno-heptose. It participates in nucleotide-sugar biosynthesis; ADP-L-glycero-beta-D-manno-heptose biosynthesis; ADP-L-glycero-beta-D-manno-heptose from D-glycero-beta-D-manno-heptose 7-phosphate: step 4/4. It functions in the pathway bacterial outer membrane biogenesis; LPS core biosynthesis. Functionally, catalyzes the interconversion between ADP-D-glycero-beta-D-manno-heptose and ADP-L-glycero-beta-D-manno-heptose via an epimerization at carbon 6 of the heptose. In Photorhabdus laumondii subsp. laumondii (strain DSM 15139 / CIP 105565 / TT01) (Photorhabdus luminescens subsp. laumondii), this protein is ADP-L-glycero-D-manno-heptose-6-epimerase.